The chain runs to 172 residues: Male-specific submandibular salivary gland protein (172 aa).

The signal sequence occupies residues 1-15; that stretch reads MVKFLLLALALGVSC. The N-linked (GlcNAc...) asparagine glycan is linked to Asn-41. 2 disulfide bridges follow: Cys-60-Cys-64 and Cys-79-Cys-170.

Belongs to the calycin superfamily. Lipocalin family. In terms of processing, N-glycosylated. In terms of tissue distribution, expressed in acinar cells of the submandibular salivary gland from where it is secreted into saliva (at protein level). Also released from the submandibular salivary gland into blood and excreted in urine (at protein level). Expressed in the lacrimal gland from where it is secreted into tears (at protein level).

Its subcellular location is the secreted. It is found in the cytoplasm. The protein is Male-specific submandibular salivary gland protein of Mesocricetus auratus (Golden hamster).